A 454-amino-acid polypeptide reads, in one-letter code: Pyrrolysine--tRNA ligase (454 aa).

The interval 102–138 (TRTKKAMPKSVARAPKPLENTEAAQAQPSGSKFSPAI) is disordered. Positions 123–133 (EAAQAQPSGSK) are enriched in polar residues.

The protein belongs to the class-II aminoacyl-tRNA synthetase family.

It localises to the cytoplasm. The enzyme catalyses tRNA(Pyl) + L-pyrrolysine + ATP = L-pyrrolysyl-tRNA(Pyl) + AMP + diphosphate. Its function is as follows. Catalyzes the attachment of pyrrolysine to tRNA(Pyl). Pyrrolysine is a lysine derivative encoded by the termination codon UAG. The protein is Pyrrolysine--tRNA ligase of Methanosarcina mazei (strain ATCC BAA-159 / DSM 3647 / Goe1 / Go1 / JCM 11833 / OCM 88) (Methanosarcina frisia).